The following is a 180-amino-acid chain: Acireductone dioxygenase (180 aa).

Fe(2+) contacts are provided by His-97, His-99, Glu-103, and His-141. Residues His-97, His-99, Glu-103, and His-141 each coordinate Ni(2+).

The protein belongs to the acireductone dioxygenase (ARD) family. Monomer. The cofactor is Fe(2+). Ni(2+) is required as a cofactor.

It catalyses the reaction 1,2-dihydroxy-5-(methylsulfanyl)pent-1-en-3-one + O2 = 3-(methylsulfanyl)propanoate + CO + formate + 2 H(+). It carries out the reaction 1,2-dihydroxy-5-(methylsulfanyl)pent-1-en-3-one + O2 = 4-methylsulfanyl-2-oxobutanoate + formate + 2 H(+). The protein operates within amino-acid biosynthesis; L-methionine biosynthesis via salvage pathway; L-methionine from S-methyl-5-thio-alpha-D-ribose 1-phosphate: step 5/6. Functionally, catalyzes 2 different reactions between oxygen and the acireductone 1,2-dihydroxy-3-keto-5-methylthiopentene (DHK-MTPene) depending upon the metal bound in the active site. Fe-containing acireductone dioxygenase (Fe-ARD) produces formate and 2-keto-4-methylthiobutyrate (KMTB), the alpha-ketoacid precursor of methionine in the methionine recycle pathway. Ni-containing acireductone dioxygenase (Ni-ARD) produces methylthiopropionate, carbon monoxide and formate, and does not lie on the methionine recycle pathway. The protein is Acireductone dioxygenase of Yersinia enterocolitica serotype O:8 / biotype 1B (strain NCTC 13174 / 8081).